Consider the following 726-residue polypeptide: Catalase-peroxidase (726 aa).

Residues 1–33 (MSTSDDIHNTTATGKCPFHQGGHDQSAGGGTTT) form a disordered region. A cross-link (tryptophyl-tyrosyl-methioninium (Trp-Tyr) (with M-252)) is located at residues 105–226 (WHGAGTYRSI…LGATEMGLIY (122 aa)). The active-site Proton acceptor is the His-106. The segment at residues 226 to 252 (YVNPEGPDHSGEPLSAAAAIRATFGNM) is a cross-link (tryptophyl-tyrosyl-methioninium (Tyr-Met) (with W-105)). His-267 is a heme b binding site.

Belongs to the peroxidase family. Peroxidase/catalase subfamily. Homodimer or homotetramer. It depends on heme b as a cofactor. Post-translationally, formation of the three residue Trp-Tyr-Met cross-link is important for the catalase, but not the peroxidase activity of the enzyme.

It carries out the reaction H2O2 + AH2 = A + 2 H2O. The catalysed reaction is 2 H2O2 = O2 + 2 H2O. Functionally, bifunctional enzyme with both catalase and broad-spectrum peroxidase activity. This Escherichia coli (strain UTI89 / UPEC) protein is Catalase-peroxidase.